The primary structure comprises 312 residues: uncharacterized protein (312 aa).

L112–V118 contacts ATP.

The protein belongs to the MurCDEF family.

This is an uncharacterized protein from Methanothermobacter thermautotrophicus (strain ATCC 29096 / DSM 1053 / JCM 10044 / NBRC 100330 / Delta H) (Methanobacterium thermoautotrophicum).